Reading from the N-terminus, the 347-residue chain is MTFETAEGLADQVLKFLSDKLETNYRVAVIVVGPPGSGKSTISEKLCHEINSRYNKYLKESGSRPHLQENLNERIDLCEGIPKFEEKSLHDVQNGFFNHVQDQDFQPKKFVDKNDGSEVVVGIGGLPNSIRVENVAPLEPSNHDYKIAKIVPMDGFHLSRRHLDHFDDPVEAHRRRGSPPTFDSNNCLQLCKLLAKTCTIKPTLPVNKTTADTGTLFDKISDTFSESVPSIYVPGFDHALKDPSTGQHCVDAFTRIIVLEGLYLLLDEDNWRDIYPTFKDTHAVIVWKLDLGVDVLEQRVAKRHLQSGLAATLEAGVERFRMNDLINALRIKEHCLAADDIVSISNK.

33–41 is a binding site for ATP; it reads GPPGSGKST.

This sequence belongs to the YFH7 family.

Functionally, ATP-dependent kinase that could be involved in endoplasmic reticulum membrane assembly. The sequence is that of ATP-dependent kinase YFH7 (YFH7) from Lachancea thermotolerans (strain ATCC 56472 / CBS 6340 / NRRL Y-8284) (Yeast).